Here is a 53-residue protein sequence, read N- to C-terminus: Lupus La protein homolog (53 aa).

Positions G1–D13 are enriched in basic and acidic residues. The segment at G1–Q53 is disordered. Residue K8 is modified to N6-acetyllysine. T10 bears the Phosphothreonine mark. S14 carries the post-translational modification Phosphoserine. Over residues R29 to A40 the composition is skewed to basic and acidic residues.

Interacts with DDX15. May interact with RUFY1. In terms of processing, phosphorylated.

The protein localises to the nucleus. Functionally, binds to the 3' poly(U) terminus of nascent RNA polymerase III transcripts, protecting them from exonuclease digestion and facilitating their folding and maturation. The polypeptide is Lupus La protein homolog (SSB) (Oryctolagus cuniculus (Rabbit)).